We begin with the raw amino-acid sequence, 88 residues long: Small ribosomal subunit protein uS17 (88 aa).

It belongs to the universal ribosomal protein uS17 family. In terms of assembly, part of the 30S ribosomal subunit.

In terms of biological role, one of the primary rRNA binding proteins, it binds specifically to the 5'-end of 16S ribosomal RNA. This Prochlorococcus marinus (strain MIT 9312) protein is Small ribosomal subunit protein uS17.